Reading from the N-terminus, the 250-residue chain is Exotoxin type A (250 aa).

The first 30 residues, 1 to 30 (MENNKEVLKKMVFFVLMKFLGLTILPKGIC), serve as a signal peptide directing secretion. Residues cysteine 117 and cysteine 128 are joined by a disulfide bond.

It belongs to the staphylococcal/streptococcal toxin family.

Functionally, causative agent of the symptoms associated with scarlet fever, have been associated with streptococcal toxic shock-like disease and may play a role in the early events of rheumatic fever. This chain is Exotoxin type A (speA), found in Streptococcus pyogenes.